A 276-amino-acid chain; its full sequence is Elongation factor Ts, mitochondrial (276 aa).

It belongs to the EF-Ts family.

It localises to the mitochondrion. Its function is as follows. Associates with the EF-Tu.GDP complex and induces the exchange of GDP to GTP. It remains bound to the aminoacyl-tRNA.EF-Tu.GTP complex up to the GTP hydrolysis stage on the ribosome. The chain is Elongation factor Ts, mitochondrial from Leishmania major.